The sequence spans 460 residues: NADH-ubiquinone oxidoreductase chain 4 (460 aa).

The next 13 membrane-spanning stretches (helical) occupy residues 20–42 (SKWL…LTWL), 61–81 (PLST…ILAS), 94–113 (RMYI…AFGA), 114–134 (TKII…LIII), 148–168 (TYFL…LLLL), 195–215 (IWWA…GMHL), 225–245 (PVAG…YGMM), 258–278 (LAYP…LVCL), 285–304 (SLIA…GILI), 308–330 (WGFT…LFCL), 351–371 (MVLP…LALP), 380–400 (LMII…TGMG), and 436–456 (LLMT…ELMW).

This sequence belongs to the complex I subunit 4 family. As to quaternary structure, core subunit of respiratory chain NADH dehydrogenase (Complex I) which is composed of 45 different subunits.

It is found in the mitochondrion inner membrane. The catalysed reaction is a ubiquinone + NADH + 5 H(+)(in) = a ubiquinol + NAD(+) + 4 H(+)(out). Functionally, core subunit of the mitochondrial membrane respiratory chain NADH dehydrogenase (Complex I) which catalyzes electron transfer from NADH through the respiratory chain, using ubiquinone as an electron acceptor. Essential for the catalytic activity and assembly of complex I. This Danio rerio (Zebrafish) protein is NADH-ubiquinone oxidoreductase chain 4 (mt-nd4).